We begin with the raw amino-acid sequence, 398 residues long: Phosphoglycerate kinase (398 aa).

Residues 21–23, Arg-36, 59–62, Arg-119, and Arg-157 each bind substrate; these read DFN and HLGR. ATP-binding positions include Lys-208, Gly-296, Glu-327, and 354-357; that span reads GGDS.

This sequence belongs to the phosphoglycerate kinase family. As to quaternary structure, monomer.

The protein localises to the cytoplasm. The enzyme catalyses (2R)-3-phosphoglycerate + ATP = (2R)-3-phospho-glyceroyl phosphate + ADP. Its pathway is carbohydrate degradation; glycolysis; pyruvate from D-glyceraldehyde 3-phosphate: step 2/5. This chain is Phosphoglycerate kinase, found in Streptococcus agalactiae serotype Ia (strain ATCC 27591 / A909 / CDC SS700).